We begin with the raw amino-acid sequence, 294 residues long: uncharacterized protein (294 aa).

Residues 181–204 form a disordered region; sequence DEPFPTTKNHNNDKRETNDKDDQQ. Positions 190 to 204 are enriched in basic and acidic residues; sequence HNNDKRETNDKDDQQ.

It belongs to the IIV-6 391R family.

This is an uncharacterized protein from Acheta domesticus (House cricket).